The following is a 308-amino-acid chain: Putative S-adenosyl-L-methionine-dependent methyltransferase Mjls_1073 (308 aa).

Residues Asp133 and 162-163 contribute to the S-adenosyl-L-methionine site; that span reads DL.

It belongs to the UPF0677 family.

Exhibits S-adenosyl-L-methionine-dependent methyltransferase activity. The protein is Putative S-adenosyl-L-methionine-dependent methyltransferase Mjls_1073 of Mycobacterium sp. (strain JLS).